Here is a 134-residue protein sequence, read N- to C-terminus: STAG3-like protein 3 (134 aa).

In terms of domain architecture, SCD spans 10–95; it reads PKVTCRDVLP…GCFKDWMVSM (86 aa).

It belongs to the SCC3 family.

The protein resides in the nucleus. The protein is STAG3-like protein 3 (STAG3L3) of Homo sapiens (Human).